Here is a 213-residue protein sequence, read N- to C-terminus: Immunoglobulin lambda-like polypeptide 1 (213 aa).

Positions 1–37 (MRPGTGQGGLEAPGEPGPNLRQRWPLLLLGLAVVTHG) are cleaved as a signal peptide. The interval 97–108 (VFGSGTQLTVLS) is j region. A c region region spans residues 109 to 213 (QPKATPSVTL…EKTVAPAECS (105 aa)). Residues 114 to 208 (PSVTLFPPSS…EGSTVEKTVA (95 aa)) enclose the Ig-like C1-type domain. The cysteines at positions 135 and 194 are disulfide-linked.

In terms of assembly, associates non-covalently with VPREB1. Interacts with SYNV1/HRD1 (via N-terminus); this interaction leads to increased IGLL1 ubiquitination and degradation in pre-B cells, possibly through a lysosomal, not proteasomal, pathway. As to expression, expressed only in pre-B-cells and a special B-cell line (which is surface Ig negative).

The protein localises to the endoplasmic reticulum. It is found in the secreted. In terms of biological role, critical for B-cell development. The polypeptide is Immunoglobulin lambda-like polypeptide 1 (IGLL1) (Homo sapiens (Human)).